Here is an 884-residue protein sequence, read N- to C-terminus: Alanine--tRNA ligase (884 aa).

4 residues coordinate Zn(2+): histidine 565, histidine 569, cysteine 674, and histidine 678.

This sequence belongs to the class-II aminoacyl-tRNA synthetase family. Requires Zn(2+) as cofactor.

It localises to the cytoplasm. The catalysed reaction is tRNA(Ala) + L-alanine + ATP = L-alanyl-tRNA(Ala) + AMP + diphosphate. Its function is as follows. Catalyzes the attachment of alanine to tRNA(Ala) in a two-step reaction: alanine is first activated by ATP to form Ala-AMP and then transferred to the acceptor end of tRNA(Ala). Also edits incorrectly charged Ser-tRNA(Ala) and Gly-tRNA(Ala) via its editing domain. The chain is Alanine--tRNA ligase from Xanthobacter autotrophicus (strain ATCC BAA-1158 / Py2).